The chain runs to 673 residues: UvrABC system protein C (673 aa).

Residues 16–95 (VEPGVYKFRD…IKEFDPRFNV (80 aa)) form the GIY-YIG domain. Residues 208 to 243 (DKMVRELERRMHAAAEDLDFETAARLRDDVQALRRA) enclose the UVR domain. Residues 488-526 (RDEAERDELDGTAAGAPLVDDDETPTSRPGIDPTTGRPR) form a disordered region.

The protein belongs to the UvrC family. Interacts with UvrB in an incision complex.

The protein localises to the cytoplasm. Its function is as follows. The UvrABC repair system catalyzes the recognition and processing of DNA lesions. UvrC both incises the 5' and 3' sides of the lesion. The N-terminal half is responsible for the 3' incision and the C-terminal half is responsible for the 5' incision. The protein is UvrABC system protein C of Nocardia farcinica (strain IFM 10152).